The primary structure comprises 138 residues: Small ribosomal subunit protein uS12m (138 aa).

The transit peptide at 1–29 (MSWSGLLHGLNTSLTCGPALVPRLWATCS) directs the protein to the mitochondrion. A disordered region spans residues 36–56 (MHRLGPPKRPPRKLGPTEGRP).

Belongs to the universal ribosomal protein uS12 family. Component of the mitochondrial small ribosomal subunit (mt-SSU). Mature mammalian 55S mitochondrial ribosomes consist of a small (28S) and a large (39S) subunit. The 28S small subunit contains a 12S ribosomal RNA (12S mt-rRNA) and 30 different proteins. The 39S large subunit contains a 16S rRNA (16S mt-rRNA), a copy of mitochondrial valine transfer RNA (mt-tRNA(Val)), which plays an integral structural role, and 52 different proteins.

It localises to the mitochondrion. The polypeptide is Small ribosomal subunit protein uS12m (MRPS12) (Homo sapiens (Human)).